The primary structure comprises 217 residues: MSIGILGKKLGMSQLFDDDGNAVPVTLIEAGPCRVTQLKTQSLDGYTAIQIGYGVSKDKHLSKPEKGHLLKSGKELLKHLKEFKVEENSSYEIGKEITVTNFEVGQKVDISGKSMGRGFSGYQKRHGFSRGPMSHGSKNHRAPGSTGAGTTPGRIYPGKRMAGRYGGKKITTKGLLVVKIDDQKNLLVVKGSVPGKPGSIVNIRPNNTVGNKGGTKS.

A disordered region spans residues 129-161; the sequence is SRGPMSHGSKNHRAPGSTGAGTTPGRIYPGKRM. Over residues 142–153 the composition is skewed to low complexity; it reads APGSTGAGTTPG.

This sequence belongs to the universal ribosomal protein uL3 family. Part of the 50S ribosomal subunit. Forms a cluster with proteins L14 and L19.

In terms of biological role, one of the primary rRNA binding proteins, it binds directly near the 3'-end of the 23S rRNA, where it nucleates assembly of the 50S subunit. This chain is Large ribosomal subunit protein uL3, found in Prochlorococcus marinus (strain MIT 9515).